We begin with the raw amino-acid sequence, 128 residues long: Ribosome-binding factor A (128 aa).

The protein belongs to the RbfA family. As to quaternary structure, monomer. Binds 30S ribosomal subunits, but not 50S ribosomal subunits or 70S ribosomes.

Its subcellular location is the cytoplasm. In terms of biological role, one of several proteins that assist in the late maturation steps of the functional core of the 30S ribosomal subunit. Associates with free 30S ribosomal subunits (but not with 30S subunits that are part of 70S ribosomes or polysomes). Required for efficient processing of 16S rRNA. May interact with the 5'-terminal helix region of 16S rRNA. This is Ribosome-binding factor A from Pseudomonas paraeruginosa (strain DSM 24068 / PA7) (Pseudomonas aeruginosa (strain PA7)).